Here is a 922-residue protein sequence, read N- to C-terminus: MASLKEILIHVEQMEDGSFTLSAFDENEQPLPYSHMKKHLFQWHESSFYGTFLEDVSFIGTTAVLLSPWMTVELLGKNSFNSFSSVQLTEETEPLIEAASTIYEFIADGDFMPDYDAWTNGVFRWKDRDNILEGFTAEWFSAAVQDYIQYDDDLREKWEHIKEKSPAVTTFRGHFLDEEDFLEGIGWIDDQSPFTVGLRLNEPDFDGDEWKIEMFLRDKKSGAVEFFDGLKSLKKSWQAYSDKIAREQDRFHRTVPWLSFDSGTTLISEEEAWIFLSEASETLVDMGVEILLPSWWQIVRDSNMMLKAKVSSSPRGESFVGMNALLDFNWRFATNGIELTEAEFNELVASNRRLVNIRGQWVKIDPQFIKQMKRLMEKAESEGLHMSDILARELMDQQDGGLEDSDLIDTSAFAGIQFDLSKQLRSLIRKLTAAENLPEHKVSPSFKGTLRPYQKYGMNWLLFLRESGFGACLADDMGLGKTIQMIAYFLHVKESGRQKTPHLIIAPTSVLGNWQRELQTFAPDLSVALHYGPRRPKGDDFAAHYENADVVLTSYGLSHADTEELSSVTWNTICLDEAQNIKNAHTKQSRAIRKLKGLHHIALSGTPMENRLTELWSIFDFMNKGYLGSLTGFHKRYVLPIEKDRDEKRIGQLQQLIRPFLLRRTKRDEEVALNLPEKLEEKEFIPLSAEQASLYEQLVKDTFDHMTSLTGMQRKALILSMLGRLKQICDHPALYLKEEQTELLAGRSVKLEKLLELMTAIRAQNESCLIFTQYIQMGNMMKRLLEKTFGEPVQFLNGSLSKQERDTLVEKFQRKEYPTLILSLKAGGTGLNLTAANHVIHYDRWWNPAVENQATDRAYRIGQERFVHVHKMITTGTIEEKIDVMLESKQTLNDQIIQSENWITELSTQELEELFTLSATAQ.

Residues 462–625 enclose the Helicase ATP-binding domain; it reads LFLRESGFGA…WSIFDFMNKG (164 aa). ATP is bound at residue 475–482; that stretch reads DDMGLGKT. The short motif at 576–579 is the DEAQ box element; it reads DEAQ. Residues 753-907 form the Helicase C-terminal domain; that stretch reads KLLELMTAIR…QSENWITELS (155 aa).

The protein belongs to the SNF2/RAD54 helicase family. In terms of assembly, interacts with the RNA polymerase core.

In Bacillus subtilis (strain 168), this protein is Putative ATP-dependent helicase/translocase YwqA (ywqA).